We begin with the raw amino-acid sequence, 303 residues long: 3-methyl-2-oxobutanoate hydroxymethyltransferase (303 aa).

Polar residues predominate over residues Met-1–Gln-10. The disordered stretch occupies residues Met-1–Ser-41. Residues Asp-84 and Asp-123 each contribute to the Mg(2+) site. 3-methyl-2-oxobutanoate is bound by residues Asp-84–Ser-85, Asp-123, and Lys-153. Glu-155 contributes to the Mg(2+) binding site. Residue Glu-221 is the Proton acceptor of the active site.

Belongs to the PanB family. As to quaternary structure, homodecamer; pentamer of dimers. Mg(2+) is required as a cofactor.

It localises to the cytoplasm. It catalyses the reaction 3-methyl-2-oxobutanoate + (6R)-5,10-methylene-5,6,7,8-tetrahydrofolate + H2O = 2-dehydropantoate + (6S)-5,6,7,8-tetrahydrofolate. The protein operates within cofactor biosynthesis; (R)-pantothenate biosynthesis; (R)-pantoate from 3-methyl-2-oxobutanoate: step 1/2. Functionally, catalyzes the reversible reaction in which hydroxymethyl group from 5,10-methylenetetrahydrofolate is transferred onto alpha-ketoisovalerate to form ketopantoate. The chain is 3-methyl-2-oxobutanoate hydroxymethyltransferase from Frankia alni (strain DSM 45986 / CECT 9034 / ACN14a).